The chain runs to 1047 residues: Probable alpha-mannosidase At5g66150 (1047 aa).

The signal sequence occupies residues 1–27 (MEKPGMSLLKGSLCVIVFLLLLSLVES). Residues His-56, Asp-58, and Asp-178 each coordinate Zn(2+). Asn-280, Asn-287, and Asn-345 each carry an N-linked (GlcNAc...) asparagine glycan. His-419 is a binding site for Zn(2+). 2 cysteine pairs are disulfide-bonded: Cys-455/Cys-465 and Cys-476/Cys-484. N-linked (GlcNAc...) asparagine glycosylation is found at Asn-480, Asn-508, Asn-541, Asn-605, Asn-606, Asn-668, Asn-780, and Asn-857. Cys-855 and Cys-860 form a disulfide bridge.

Belongs to the glycosyl hydrolase 38 family. As to quaternary structure, homodimer. The cofactor is Zn(2+).

The protein localises to the vacuole. It catalyses the reaction Hydrolysis of terminal, non-reducing alpha-D-mannose residues in alpha-D-mannosides.. In terms of biological role, liberates mannose from p-nitrophenyl-alpha-D-mannoside in vitro. The polypeptide is Probable alpha-mannosidase At5g66150 (Arabidopsis thaliana (Mouse-ear cress)).